Consider the following 217-residue polypeptide: 3,4-dihydroxy-2-butanone 4-phosphate synthase (217 aa).

D-ribulose 5-phosphate is bound by residues 37 to 38 (RE), Asp-42, 150 to 154 (RGGHT), and Glu-174. Glu-38 lines the Mg(2+) pocket. His-153 serves as a coordination point for Mg(2+).

Belongs to the DHBP synthase family. As to quaternary structure, homodimer. It depends on Mg(2+) as a cofactor. The cofactor is Mn(2+).

The enzyme catalyses D-ribulose 5-phosphate = (2S)-2-hydroxy-3-oxobutyl phosphate + formate + H(+). The protein operates within cofactor biosynthesis; riboflavin biosynthesis; 2-hydroxy-3-oxobutyl phosphate from D-ribulose 5-phosphate: step 1/1. Its function is as follows. Catalyzes the conversion of D-ribulose 5-phosphate to formate and 3,4-dihydroxy-2-butanone 4-phosphate. The protein is 3,4-dihydroxy-2-butanone 4-phosphate synthase of Pectobacterium atrosepticum (strain SCRI 1043 / ATCC BAA-672) (Erwinia carotovora subsp. atroseptica).